The following is a 349-amino-acid chain: Anthranilate phosphoribosyltransferase (349 aa).

5-phospho-alpha-D-ribose 1-diphosphate-binding positions include Gly-82, 85 to 86 (GD), 92 to 95 (NVST), 110 to 118 (KHGNRAVSG), and Ser-122. An anthranilate-binding site is contributed by Gly-82. Ser-94 lines the Mg(2+) pocket. An anthranilate-binding site is contributed by Asn-113. Position 168 (Arg-168) interacts with anthranilate. Positions 227 and 228 each coordinate Mg(2+).

This sequence belongs to the anthranilate phosphoribosyltransferase family. In terms of assembly, homodimer. It depends on Mg(2+) as a cofactor.

The enzyme catalyses N-(5-phospho-beta-D-ribosyl)anthranilate + diphosphate = 5-phospho-alpha-D-ribose 1-diphosphate + anthranilate. Its pathway is amino-acid biosynthesis; L-tryptophan biosynthesis; L-tryptophan from chorismate: step 2/5. Catalyzes the transfer of the phosphoribosyl group of 5-phosphorylribose-1-pyrophosphate (PRPP) to anthranilate to yield N-(5'-phosphoribosyl)-anthranilate (PRA). This Pseudomonas fluorescens (strain ATCC BAA-477 / NRRL B-23932 / Pf-5) protein is Anthranilate phosphoribosyltransferase.